A 75-amino-acid chain; its full sequence is Putative UPF0377 protein YJL222W-A (75 aa).

Belongs to the UPF0377 family.

This chain is Putative UPF0377 protein YJL222W-A, found in Saccharomyces cerevisiae (strain ATCC 204508 / S288c) (Baker's yeast).